Reading from the N-terminus, the 415-residue chain is Serine hydroxymethyltransferase 2 (415 aa).

Residues Leu-122 and 126 to 128 (GHL) each bind (6S)-5,6,7,8-tetrahydrofolate. Lys-230 carries the N6-(pyridoxal phosphate)lysine modification.

Belongs to the SHMT family. In terms of assembly, homodimer. The cofactor is pyridoxal 5'-phosphate.

It is found in the cytoplasm. It carries out the reaction (6R)-5,10-methylene-5,6,7,8-tetrahydrofolate + glycine + H2O = (6S)-5,6,7,8-tetrahydrofolate + L-serine. It participates in one-carbon metabolism; tetrahydrofolate interconversion. The protein operates within amino-acid biosynthesis; glycine biosynthesis; glycine from L-serine: step 1/1. Functionally, catalyzes the reversible interconversion of serine and glycine with tetrahydrofolate (THF) serving as the one-carbon carrier. This reaction serves as the major source of one-carbon groups required for the biosynthesis of purines, thymidylate, methionine, and other important biomolecules. Also exhibits THF-independent aldolase activity toward beta-hydroxyamino acids, producing glycine and aldehydes, via a retro-aldol mechanism. This is Serine hydroxymethyltransferase 2 from Burkholderia lata (strain ATCC 17760 / DSM 23089 / LMG 22485 / NCIMB 9086 / R18194 / 383).